The primary structure comprises 453 residues: MALNFSHRPFSSHLSEEPMMIANGNWCSSFDNGRKNTGGDASSVDILDVLPSDPFGMDINNTFTAITGWLEDLEDDYNNQYGRRRRDDIWIGDGNRQQLFAGLSFFWNNAMQFQSSGYSYGSESLFGGAFDGSLFSTCKFPESSGENNGFGGALDGDGSCHGAFISASSVDEVLSHENARNGEVVGSSDRCNNGEEDAYVHPAIGFCLYHLRGKDLLSVSMVCKSLHTTVCDDTLLWKHIHICRPLNEKITEEALLHLTERAQGTMQCLRIVDCCRITDDCLKRVVARNRQVVKIGVPGCTRITIDGILSVLRDLKSAGKLQVKHLQLRGLFGVTKDHYDELIDLLNIDNKVKQTIQKPRFYHRGEACVSCDDDRALDIEMCPKCQNFKLVYDCPAEDCKGKKKGSEECRACSLCIQRCYHCGRCIIDTEYEEMFCLELLCAVCSKPTPKLTL.

In terms of domain architecture, F-box; degenerate spans 34–104 (RKNTGGDASS…NRQQLFAGLS (71 aa)).

Part of a SCF (ASK-cullin-F-box) protein ligase complex. Interacts with CUL1, SKP1A/ASK1 and SPK1B/ASK2.

Its pathway is protein modification; protein ubiquitination. Its function is as follows. Component of SCF(ASK-cullin-F-box) E3 ubiquitin ligase complexes, which may mediate the ubiquitination and subsequent proteasomal degradation of target proteins. The polypeptide is F-box protein SKIP14 (SKIP14) (Arabidopsis thaliana (Mouse-ear cress)).